The chain runs to 354 residues: Cysteine proteinase A (354 aa).

An N-terminal signal peptide occupies residues 1–24; sequence MARRNPLLFAIVVTILFVVCYGSA. Positions 25-125 are cleaved as a propeptide — activation peptide; the sequence is LIAQTPPPVD…HKEDVHVDDS (101 aa). Cystine bridges form between Cys-150/Cys-191, Cys-184/Cys-229, and Cys-282/Cys-330. Residue Cys-153 is part of the active site. Asn-208 carries N-linked (GlcNAc...) asparagine glycosylation. Catalysis depends on residues His-289 and Asn-309.

This sequence belongs to the peptidase C1 family.

This Leishmania mexicana protein is Cysteine proteinase A (LMCPA).